The sequence spans 338 residues: Anthranilate phosphoribosyltransferase (338 aa).

5-phospho-alpha-D-ribose 1-diphosphate-binding positions include Gly81, 84–85 (GD), Ser89, 91–94 (NVST), 109–117 (KHGNRALSS), and Ala121. Gly81 lines the anthranilate pocket. Residue Ser93 coordinates Mg(2+). An anthranilate-binding site is contributed by Asn112. Arg167 contacts anthranilate. Residues Asp226 and Glu227 each contribute to the Mg(2+) site.

This sequence belongs to the anthranilate phosphoribosyltransferase family. In terms of assembly, homodimer. Mg(2+) is required as a cofactor.

It carries out the reaction N-(5-phospho-beta-D-ribosyl)anthranilate + diphosphate = 5-phospho-alpha-D-ribose 1-diphosphate + anthranilate. It functions in the pathway amino-acid biosynthesis; L-tryptophan biosynthesis; L-tryptophan from chorismate: step 2/5. In terms of biological role, catalyzes the transfer of the phosphoribosyl group of 5-phosphorylribose-1-pyrophosphate (PRPP) to anthranilate to yield N-(5'-phosphoribosyl)-anthranilate (PRA). This chain is Anthranilate phosphoribosyltransferase, found in Rhodopseudomonas palustris (strain TIE-1).